The sequence spans 473 residues: Sulfhydrylase-like protein lolC2 (473 aa).

Lys-226 is modified (N6-(pyridoxal phosphate)lysine).

It belongs to the trans-sulfuration enzymes family. Pyridoxal 5'-phosphate serves as cofactor.

It participates in alkaloid biosynthesis. Functionally, sulfhydrylase-like protein; part of the gene cluster that mediates the biosynthesis of loline alkaloids, potent insecticidal agents composed of a pyrrolizidine ring system and an uncommon ether bridge linking carbons 2 and 7. Lolines are structurally differentiated by the various modifications of the L-amino group and include norloline, loline, N-methylloline, N-acetylloline, N-acetylnorloline, and N-formylloline. The first committed step is the condensation of O-acetyl-L-homoserine (derived from L-aspartic acid) and L-proline, probably catalyzed by the gamma-type pyridoxal 5'-phosphate(PLP)-dependent enzyme lolC, to give the diamino diacid, NACPP. Ensuing cyclization, decarboxylation, and acetylation steps yield 1-exo-acetamidopyrrolizidine (AcAP). LolO is required for installation of the ether bridge upon the pathway intermediate, 1-exo-acetamidopyrrolizidine (AcAP). In sequential 2-oxoglutarate- and O(2)-consuming steps, lolO removes hydrogens from C2 and C7 of AcAP to form both carbon-oxygen bonds in N-acetylnorloline (NANL), the precursor to all other lolines. The enzymes lolD, lolE, lolF and lolT have also been proposed to be involved in the ether-bridge installation. Further processing of the exocyclic moiety of NANL by fungal N-acetamidase (LolN), methyltransferase (LolM), and cytochrome P450 (LolP) enzymes, with occasional involvement of a plant acetyltransferase, generates the other known lolines. LolN transforms NANL to norlonine which is monomethylated and dimethylated to respectively lonine and N-methyllonine (NML) by lolM. LolP catalyzes hydroxylation of the methyl group in N-methylloline (NML) and further oxygenation to N-formylloline (NFL). A plant acetyltransferase is responsible for the acetylation of loline to form N-acetylloline (NAL). LolA might interact with aspartate kinase to prevent feedback inhibition of its activity by these end products and thereby promote production of L-homoserine from L-aspartate. The polypeptide is Sulfhydrylase-like protein lolC2 (Epichloe uncinata (Endophyte fungus)).